The chain runs to 221 residues: Probable septum site-determining protein MinC (221 aa).

It belongs to the MinC family. In terms of assembly, interacts with MinD and FtsZ.

Functionally, cell division inhibitor that blocks the formation of polar Z ring septums. Rapidly oscillates between the poles of the cell to destabilize FtsZ filaments that have formed before they mature into polar Z rings. Prevents FtsZ polymerization. In Aliivibrio fischeri (strain MJ11) (Vibrio fischeri), this protein is Probable septum site-determining protein MinC.